A 352-amino-acid polypeptide reads, in one-letter code: Protein RecA (352 aa).

67 to 74 lines the ATP pocket; that stretch reads GPESSGKT. A disordered region spans residues 332–352; sequence VKPADAESKEDSPKLKAVDGF. Residues 335–352 are compositionally biased toward basic and acidic residues; the sequence is ADAESKEDSPKLKAVDGF.

This sequence belongs to the RecA family.

It localises to the cytoplasm. Functionally, can catalyze the hydrolysis of ATP in the presence of single-stranded DNA, the ATP-dependent uptake of single-stranded DNA by duplex DNA, and the ATP-dependent hybridization of homologous single-stranded DNAs. It interacts with LexA causing its activation and leading to its autocatalytic cleavage. In Pseudarthrobacter chlorophenolicus (strain ATCC 700700 / DSM 12829 / CIP 107037 / JCM 12360 / KCTC 9906 / NCIMB 13794 / A6) (Arthrobacter chlorophenolicus), this protein is Protein RecA.